Here is a 368-residue protein sequence, read N- to C-terminus: MMNSSQTLVVKLGTSVLTGGSRRLNRAHIVELVRQCAQQHEKGHRIIIVTSGAIAAGREHLGYPDLPATIASKQLLAAVGQSRLIQLWEQFFSIYGIHVGQMLLTRADLEDRERFLNARDTLQALLDNRIVPVINENDAVATAEIKVGDNDNLSALAAILGGADKLLLLTDIEGLYTADPRNNPDAKLIPEVYDISDELRMVAGDSISGLGTGGMATKLQAAGIAGRAGIDVIIAAGNKPDVISDVIEGNPVGTRFHGLESPMENRKRWIFGAPPAGEIIVDHGAETAICEKGSSLLPKGIKNIKGDFSRGEVICIRSLSGKDLAHGVCRYNSDALRLIAGHHSQQISQILGYEYGAVAVHRDDMIVS.

Lys-11 provides a ligand contact to ATP. Substrate is bound by residues Ser-51, Asp-138, and Asn-150. Residues 170–171 (TD) and 212–218 (TGGMATK) each bind ATP. Residues 276–354 (AGEIIVDHGA…QQISQILGYE (79 aa)) form the PUA domain.

This sequence belongs to the glutamate 5-kinase family.

The protein localises to the cytoplasm. The catalysed reaction is L-glutamate + ATP = L-glutamyl 5-phosphate + ADP. It functions in the pathway amino-acid biosynthesis; L-proline biosynthesis; L-glutamate 5-semialdehyde from L-glutamate: step 1/2. Functionally, catalyzes the transfer of a phosphate group to glutamate to form L-glutamate 5-phosphate. The polypeptide is Glutamate 5-kinase (Photorhabdus laumondii subsp. laumondii (strain DSM 15139 / CIP 105565 / TT01) (Photorhabdus luminescens subsp. laumondii)).